The primary structure comprises 114 residues: SLYDIAPVTPGVAVDLSHIPTDVKIKGFSGEDATPALEGADVVLISAGVARKPGMDRSDLFNVNAGIVKNLVQQIAKTRPQACIGIITNPVNTTVAIAAEVLKKAGVYDKNKLF.

An NAD(+)-binding site is contributed by Asp4. The substrate site is built by Arg51 and Arg57. Residues Asn64 and Ile87–Asn89 contribute to the NAD(+) site. Residue Asn89 coordinates substrate.

The protein belongs to the LDH/MDH superfamily. MDH type 1 family. As to quaternary structure, homodimer.

It carries out the reaction (S)-malate + NAD(+) = oxaloacetate + NADH + H(+). Its function is as follows. Catalyzes the reversible oxidation of malate to oxaloacetate. This is Malate dehydrogenase (mdh) from Klebsiella pneumoniae subsp. rhinoscleromatis.